The chain runs to 296 residues: GTPase Era (296 aa).

Positions 3–170 constitute an Era-type G domain; the sequence is KSGFVTIVGR…KELMFKYIPE (168 aa). Positions 11–18 are G1; the sequence is GRPNVGKS. Residue 11–18 participates in GTP binding; the sequence is GRPNVGKS. Residues 37–41 are G2; sequence QTTRN. Residues 58 to 61 are G3; it reads DTPG. Residues 58–62 and 120–123 contribute to the GTP site; these read DTPGI and NKID. Positions 120–123 are G4; the sequence is NKID. The G5 stretch occupies residues 149–151; the sequence is ISA. The KH type-2 domain maps to 201 to 278; it reads LSEEVPHGIA…YIRLWVKVKE (78 aa).

Belongs to the TRAFAC class TrmE-Era-EngA-EngB-Septin-like GTPase superfamily. Era GTPase family. In terms of assembly, monomer.

The protein resides in the cytoplasm. It is found in the cell membrane. An essential GTPase that binds both GDP and GTP, with rapid nucleotide exchange. Plays a role in 16S rRNA processing and 30S ribosomal subunit biogenesis and possibly also in cell cycle regulation and energy metabolism. This chain is GTPase Era, found in Clostridium botulinum (strain 657 / Type Ba4).